The following is a 278-amino-acid chain: Probable endonuclease 4 (278 aa).

The Zn(2+) site is built by His69, His109, Glu145, Asp179, His182, His216, Asp229, His231, and Glu261.

Belongs to the AP endonuclease 2 family. The cofactor is Zn(2+).

It carries out the reaction Endonucleolytic cleavage to 5'-phosphooligonucleotide end-products.. In terms of biological role, endonuclease IV plays a role in DNA repair. It cleaves phosphodiester bonds at apurinic or apyrimidinic (AP) sites, generating a 3'-hydroxyl group and a 5'-terminal sugar phosphate. This Buchnera aphidicola subsp. Baizongia pistaciae (strain Bp) protein is Probable endonuclease 4.